The primary structure comprises 184 residues: Cytosolic Prostaglandin E synthase (184 aa).

The CS domain occupies 7–96; the sequence is LIPPPVSWAQ…AAGPYWSSLT (90 aa). The disordered stretch occupies residues 115–184; sequence ESDDEEGDQK…EGDKEKKPAA (70 aa). Serine 116, serine 127, serine 135, serine 156, and serine 162 each carry phosphoserine. A compositionally biased stretch (acidic residues) spans 147-158; that stretch reads FNVDDEEEDSDD. Positions 175–184 are enriched in basic and acidic residues; sequence EGDKEKKPAA.

The protein belongs to the p23/wos2 family.

The protein localises to the cytoplasm. The enzyme catalyses prostaglandin H2 = prostaglandin E2. In terms of biological role, cytosolic prostaglandin synthase that catalyzes the oxidoreduction of prostaglandin endoperoxide H2 (PGH2) to prostaglandin E2 (PGE2). Through production of PGE2 may regulate the activity of non-muscle myosin II in an autocrine or paracrine fashion; this may influence border cell and nurse cell stiffness to facilitate border cell migration during oogenesis. In Drosophila melanogaster (Fruit fly), this protein is Cytosolic Prostaglandin E synthase.